We begin with the raw amino-acid sequence, 705 residues long: Protein artemis (705 aa).

At T380 the chain carries Phosphothreonine. S385 is subject to Phosphoserine. The segment covering 451–462 has biased composition (acidic residues); the sequence is EESNSDSGEELE. Disordered stretches follow at residues 451–484, 535–569, and 638–675; these read EESNSDSGEELETPPPSLQGGLGPSTLVQQNADP, PKLCSDSDGDSTHISSQNSSQSTHITDQGSQGWDS, and TLSGRKSPPEKTLLSSTRADSQSSSDFEIPSTPEAELP. The segment covering 546-559 has biased composition (low complexity); the sequence is THISSQNSSQSTHI. Residues 560–569 are compositionally biased toward polar residues; it reads TDQGSQGWDS. The span at 652 to 662 shows a compositional bias: low complexity; that stretch reads SSTRADSQSSS. A Phosphoserine; by ATM modification is found at S658.

Belongs to the DNA repair metallo-beta-lactamase (DRMBL) family. Interacts with LIG4; the interaction is direct. Interacts with ATM. Interacts with BRCA1. Interacts with PRKDC. Interacts with TP53BP1. Also exhibits ATM- and phosphorylation-dependent interaction with the MRN complex, composed of MRE11, RAD50, and NBN. In terms of processing, phosphorylation on undefined residues by PRKDC may stimulate endonucleolytic activity on 5' and 3' hairpins and overhangs. PRKDC must remain present, even after phosphorylation, for efficient hairpin opening. Also phosphorylated by ATM in response to ionizing radiation (IR) and by ATR in response to ultraviolet (UV) radiation.

It is found in the nucleus. Its function is as follows. Required for V(D)J recombination, the process by which exons encoding the antigen-binding domains of immunoglobulins and T-cell receptor proteins are assembled from individual V, (D), and J gene segments. V(D)J recombination is initiated by the lymphoid specific RAG endonuclease complex, which generates site specific DNA double strand breaks (DSBs). These DSBs present two types of DNA end structures: hairpin sealed coding ends and phosphorylated blunt signal ends. These ends are independently repaired by the non homologous end joining (NHEJ) pathway to form coding and signal joints respectively. This protein likely exhibits single-strand specific 5'-3' exonuclease activity in isolation, and may acquire endonucleolytic activity on 5' and 3' hairpins and overhangs when in a complex with PRKDC. The latter activity may be required specifically for the resolution of closed hairpins prior to the formation of the coding joint. May also be required for the repair of complex DSBs induced by ionizing radiation, which require substantial end-processing prior to religation by NHEJ. The polypeptide is Protein artemis (Dclre1c) (Mus musculus (Mouse)).